A 233-amino-acid chain; its full sequence is Lipoprotein-releasing system ATP-binding protein LolD (233 aa).

Residues 6–233 (LQCDNLCKRY…TAELSLMGAE (228 aa)) form the ABC transporter domain. 42–49 (GSSGSGKS) lines the ATP pocket.

It belongs to the ABC transporter superfamily. Lipoprotein translocase (TC 3.A.1.125) family. In terms of assembly, the complex is composed of two ATP-binding proteins (LolD) and two transmembrane proteins (LolC and LolE).

It is found in the cell inner membrane. Functionally, part of the ABC transporter complex LolCDE involved in the translocation of mature outer membrane-directed lipoproteins, from the inner membrane to the periplasmic chaperone, LolA. Responsible for the formation of the LolA-lipoprotein complex in an ATP-dependent manner. In Salmonella paratyphi A (strain ATCC 9150 / SARB42), this protein is Lipoprotein-releasing system ATP-binding protein LolD.